Here is a 345-residue protein sequence, read N- to C-terminus: Phosphoribosylformylglycinamidine cyclo-ligase (345 aa).

The protein belongs to the AIR synthase family. As to quaternary structure, homodimer.

Its subcellular location is the cytoplasm. The catalysed reaction is 2-formamido-N(1)-(5-O-phospho-beta-D-ribosyl)acetamidine + ATP = 5-amino-1-(5-phospho-beta-D-ribosyl)imidazole + ADP + phosphate + H(+). The protein operates within purine metabolism; IMP biosynthesis via de novo pathway; 5-amino-1-(5-phospho-D-ribosyl)imidazole from N(2)-formyl-N(1)-(5-phospho-D-ribosyl)glycinamide: step 2/2. The chain is Phosphoribosylformylglycinamidine cyclo-ligase from Escherichia coli O157:H7.